The sequence spans 63 residues: Large ribosomal subunit protein bL35 (63 aa).

It belongs to the bacterial ribosomal protein bL35 family.

The sequence is that of Large ribosomal subunit protein bL35 from Campylobacter fetus subsp. fetus (strain 82-40).